The chain runs to 400 residues: Probable RNA polymerase sigma factor RfaY (400 aa).

Residues 62–75 carry the Polymerase core binding motif; sequence WQRLAQLHQPASFL. The H-T-H motif DNA-binding region spans 165–184; the sequence is SDAAVRKRLSRARATVRNEL.

It belongs to the sigma-70 factor family. ECF subfamily.

Sigma factors are initiation factors that promote the attachment of RNA polymerase to specific initiation sites and are then released. This sigma factor is involved in lipopolysaccharide biosynthesis and pathogenicity. The chain is Probable RNA polymerase sigma factor RfaY (rfaY) from Xanthomonas campestris pv. campestris (strain ATCC 33913 / DSM 3586 / NCPPB 528 / LMG 568 / P 25).